A 672-amino-acid chain; its full sequence is Flap endonuclease 1 (672 aa).

Positions 1 to 106 are N-domain; the sequence is MGIKGLIGFL…QTLAKRKLLR (106 aa). A Mg(2+)-binding site is contributed by Asp34. DNA is bound by residues Arg47 and Arg72. Residues Asp88, Glu160, Glu162, Asp181, and Asp183 each contribute to the Mg(2+) site. The segment at 124–252 is I-domain; sequence AIRKYVGRTV…KTAYNLIKKH (129 aa). Glu160 contributes to the DNA binding site. DNA is bound by residues Gly230 and Asp232. A Mg(2+)-binding site is contributed by Asp232. An interaction with PCNA region spans residues 327 to 335; sequence TQLSLKSFF. The interval 361 to 436 is disordered; the sequence is VESAVDSTSD…DAKKRNKRVP (76 aa). A compositionally biased stretch (basic and acidic residues) spans 370 to 382; the sequence is DDGKDEVPSDDKV.

Belongs to the XPG/RAD2 endonuclease family. FEN1 subfamily. Interacts with PCNA. Three molecules of FEN1 bind to one PCNA trimer with each molecule binding to one PCNA monomer. PCNA stimulates the nuclease activity without altering cleavage specificity. Requires Mg(2+) as cofactor. Phosphorylated. Phosphorylation upon DNA damage induces relocalization to the nuclear plasma.

The protein resides in the nucleus. The protein localises to the nucleolus. It is found in the nucleoplasm. Its subcellular location is the mitochondrion. Structure-specific nuclease with 5'-flap endonuclease and 5'-3' exonuclease activities involved in DNA replication and repair. During DNA replication, cleaves the 5'-overhanging flap structure that is generated by displacement synthesis when DNA polymerase encounters the 5'-end of a downstream Okazaki fragment. It enters the flap from the 5'-end and then tracks to cleave the flap base, leaving a nick for ligation. Also involved in the long patch base excision repair (LP-BER) pathway, by cleaving within the apurinic/apyrimidinic (AP) site-terminated flap. Acts as a genome stabilization factor that prevents flaps from equilibrating into structures that lead to duplications and deletions. Also possesses 5'-3' exonuclease activity on nicked or gapped double-stranded DNA, and exhibits RNase H activity. Also involved in replication and repair of rDNA and in repairing mitochondrial DNA. This Babesia bovis protein is Flap endonuclease 1.